A 418-amino-acid chain; its full sequence is UDP-N-acetylglucosamine 1-carboxyvinyltransferase (418 aa).

Phosphoenolpyruvate is bound at residue 22–23 (KN). Arginine 91 is a binding site for UDP-N-acetyl-alpha-D-glucosamine. The active-site Proton donor is the cysteine 115. Cysteine 115 carries the 2-(S-cysteinyl)pyruvic acid O-phosphothioketal modification. UDP-N-acetyl-alpha-D-glucosamine contacts are provided by residues 120–124 (RPVDL), 160–163 (KVSV), aspartate 305, and isoleucine 327.

Belongs to the EPSP synthase family. MurA subfamily.

The protein localises to the cytoplasm. The enzyme catalyses phosphoenolpyruvate + UDP-N-acetyl-alpha-D-glucosamine = UDP-N-acetyl-3-O-(1-carboxyvinyl)-alpha-D-glucosamine + phosphate. The protein operates within cell wall biogenesis; peptidoglycan biosynthesis. Functionally, cell wall formation. Adds enolpyruvyl to UDP-N-acetylglucosamine. The chain is UDP-N-acetylglucosamine 1-carboxyvinyltransferase from Baumannia cicadellinicola subsp. Homalodisca coagulata.